Consider the following 278-residue polypeptide: Protein FixR (278 aa).

40-64 (LLTGASRGIGHATAKLFSEAGWRII) is an NAD(+) binding site. Ser-175 serves as a coordination point for substrate. Catalysis depends on Tyr-189, which acts as the Proton acceptor.

Belongs to the short-chain dehydrogenases/reductases (SDR) family.

This Bradyrhizobium diazoefficiens (strain JCM 10833 / BCRC 13528 / IAM 13628 / NBRC 14792 / USDA 110) protein is Protein FixR (fixR).